The primary structure comprises 691 residues: Elongation factor G (691 aa).

In terms of domain architecture, tr-type G spans 8–282 (ERVRNIGIAA…AVVDYLPAPV (275 aa)). Residues 17 to 24 (AHIDAGKT), 81 to 85 (DTPGH), and 135 to 138 (NKMD) contribute to the GTP site.

Belongs to the TRAFAC class translation factor GTPase superfamily. Classic translation factor GTPase family. EF-G/EF-2 subfamily.

Its subcellular location is the cytoplasm. Its function is as follows. Catalyzes the GTP-dependent ribosomal translocation step during translation elongation. During this step, the ribosome changes from the pre-translocational (PRE) to the post-translocational (POST) state as the newly formed A-site-bound peptidyl-tRNA and P-site-bound deacylated tRNA move to the P and E sites, respectively. Catalyzes the coordinated movement of the two tRNA molecules, the mRNA and conformational changes in the ribosome. The protein is Elongation factor G of Prochlorococcus marinus (strain MIT 9312).